Consider the following 599-residue polypeptide: Bile salt-activated lipase (599 aa).

The signal sequence occupies residues Met1–Ala20. Residues Cys84 and Cys100 are joined by a disulfide bond. An N-linked (GlcNAc...) asparagine glycan is attached at Asn207. Ser214 functions as the Acyl-ester intermediate in the catalytic mechanism. A disulfide bridge links Cys266 with Cys277. N-linked (GlcNAc...) asparagine glycosylation is present at Asn325. Residues Asp340 and His455 each act as charge relay system in the active site. Positions Thr553 to Phe599 are disordered. 3 consecutive repeat copies span residues Leu559–Ala569, Pro570–Val580, and Pro581–Ser588. The segment at Leu559–Ser588 is 4 X 11 AA tandem repeats, O-glycosylated region.

Belongs to the type-B carboxylesterase/lipase family. In terms of assembly, interacts with CLC. As to expression, EXpressed by eosinophils.

Its subcellular location is the secreted. It carries out the reaction a triacylglycerol + H2O = a diacylglycerol + a fatty acid + H(+). It catalyses the reaction 1,2,3-tri-(9Z-octadecenoyl)-glycerol + H2O = di-(9Z)-octadecenoylglycerol + (9Z)-octadecenoate + H(+). The enzyme catalyses 1,2,3-trioctanoylglycerol + H2O = dioctanoylglycerol + octanoate + H(+). The catalysed reaction is a sterol ester + H2O = a sterol + a fatty acid + H(+). It carries out the reaction an acetyl ester + H2O = an aliphatic alcohol + acetate + H(+). It catalyses the reaction a butanoate ester + H2O = an aliphatic alcohol + butanoate + H(+). The enzyme catalyses 9-hexadecanoyloxy-octadecanoate + H2O = 9-hydroxy-octadecanoate + hexadecanoate + H(+). The catalysed reaction is 9-(9Z-octadecenoyloxy)-octadecanoate + H2O = 9-hydroxy-octadecanoate + (9Z)-octadecenoate + H(+). It carries out the reaction cholesteryl (9Z-octadecenoate) + H2O = cholesterol + (9Z)-octadecenoate + H(+). It catalyses the reaction 1-hexadecanoyl-sn-glycero-3-phosphocholine + H2O = sn-glycerol 3-phosphocholine + hexadecanoate + H(+). The enzyme catalyses 12-hexadecanoyloxy-octadecanoate + H2O = 12-hydroxyoctadecanoate + hexadecanoate + H(+). The catalysed reaction is 12-(9Z-octadecenoyloxy)-octadecanoate + H2O = 12-hydroxyoctadecanoate + (9Z)-octadecenoate + H(+). It carries out the reaction 13-(9Z-octadecenoyloxy)-octadecanoate + H2O = 13-hydroxy-octadecanoate + (9Z)-octadecenoate + H(+). It catalyses the reaction 9-(9Z-hexadecenoyloxy)-octadecanoate + H2O = (9Z)-hexadecenoate + 9-hydroxy-octadecanoate + H(+). The enzyme catalyses 12-(9Z-hexadecenoyloxy)-octadecanoate + H2O = 12-hydroxyoctadecanoate + (9Z)-hexadecenoate + H(+). The catalysed reaction is 13-(9Z-hexadecenoyloxy)-octadecanoate + H2O = 13-hydroxy-octadecanoate + (9Z)-hexadecenoate + H(+). It carries out the reaction 12-octadecanoyloxy-octadecanoate + H2O = 12-hydroxyoctadecanoate + octadecanoate + H(+). It catalyses the reaction 13-octadecanoyloxy-octadecanoate + H2O = 13-hydroxy-octadecanoate + octadecanoate + H(+). The enzyme catalyses 5-(9Z-hexadecenoyloxy)-octadecanoate + H2O = 5-hydroxy-octadecanoate + (9Z)-hexadecenoate + H(+). The catalysed reaction is 9-octadecanoyloxy-octadecanoate + H2O = 9-hydroxy-octadecanoate + octadecanoate + H(+). Activated by bile salts such as sodium taurocholate. Catalyzes the hydrolysis of a wide range of substrates including cholesteryl esters, phospholipids, lysophospholipids, di- and tri-acylglycerols, and fatty acid esters of hydroxy fatty acids (FAHFAs). Preferentially hydrolyzes FAHFAs with the ester bond further away from the carboxylate. Unsaturated FAHFAs are hydrolyzed more quickly than saturated FAHFAs. Has an essential role in the complete digestion of dietary lipids and their intestinal absorption, along with the absorption of fat-soluble vitamins. The sequence is that of Bile salt-activated lipase (Cel) from Mus musculus (Mouse).